The primary structure comprises 304 residues: Homoserine kinase (304 aa).

90 to 100 (PLARGLGSSAS) is a binding site for ATP.

The protein belongs to the GHMP kinase family. Homoserine kinase subfamily.

It is found in the cytoplasm. It carries out the reaction L-homoserine + ATP = O-phospho-L-homoserine + ADP + H(+). It functions in the pathway amino-acid biosynthesis; L-threonine biosynthesis; L-threonine from L-aspartate: step 4/5. Its function is as follows. Catalyzes the ATP-dependent phosphorylation of L-homoserine to L-homoserine phosphate. In Staphylococcus aureus (strain bovine RF122 / ET3-1), this protein is Homoserine kinase.